Consider the following 201-residue polypeptide: MBF complex negative regulatory component yox1 (201 aa).

The segment covering 1–22 (MSLSDSPSKSGNTGKDLISNNE) has biased composition (polar residues). The segment at 1–42 (MSLSDSPSKSGNTGKDLISNNEAKNHEDEETHQKKRRRRTTD) is disordered. Positions 23–32 (AKNHEDEETH) are enriched in basic and acidic residues. The homeobox DNA-binding region spans 33-92 (QKKRRRRTTDAEATLLEQYFLKTPKPSLIERQELSKKLKSSMTPRELQIWFQNKRQSLRR).

As to quaternary structure, component of the MBF transcription factor complex. In terms of processing, phosphorylated in response to hydroxyurea. Phosphorylation inhibits the repressor activity and is dependent on rad3. However, the regulation of yox1 by rad3 is probably indirect.

It is found in the nucleus. Functionally, negative regulatory component of the MBF transcription factor complex involved in cell-cycle G1/S phase-specific gene expression and more particularly DNA replication checkpoint-dependent gene expression. The protein is MBF complex negative regulatory component yox1 (yox1) of Schizosaccharomyces pombe (strain 972 / ATCC 24843) (Fission yeast).